The chain runs to 341 residues: 5-formaminoimidazole-4-carboxamide-1-(beta)-D-ribofuranosyl 5'-monophosphate synthetase (341 aa).

5-amino-1-(5-phospho-beta-D-ribosyl)imidazole-4-carboxamide-binding residues include H27 and S92. The 216-residue stretch at 113–328 (RELLRWEADQ…MGERIAHEIK (216 aa)) folds into the ATP-grasp domain. ATP contacts are provided by residues 143–195 (AEEV…VPAY) and E217. N237 serves as a coordination point for 5-amino-1-(5-phospho-beta-D-ribosyl)imidazole-4-carboxamide. Mg(2+)-binding residues include E276 and E289.

It belongs to the phosphohexose mutase family. Mg(2+) serves as cofactor. It depends on Mn(2+) as a cofactor.

It catalyses the reaction 5-amino-1-(5-phospho-beta-D-ribosyl)imidazole-4-carboxamide + formate + ATP = 5-formamido-1-(5-phospho-D-ribosyl)imidazole-4-carboxamide + ADP + phosphate. It functions in the pathway purine metabolism; IMP biosynthesis via de novo pathway; 5-formamido-1-(5-phospho-D-ribosyl)imidazole-4-carboxamide from 5-amino-1-(5-phospho-D-ribosyl)imidazole-4-carboxamide (formate route): step 1/1. Catalyzes the ATP- and formate-dependent formylation of 5-aminoimidazole-4-carboxamide-1-beta-d-ribofuranosyl 5'-monophosphate (AICAR) to 5-formaminoimidazole-4-carboxamide-1-beta-d-ribofuranosyl 5'-monophosphate (FAICAR) in the absence of folates. The polypeptide is 5-formaminoimidazole-4-carboxamide-1-(beta)-D-ribofuranosyl 5'-monophosphate synthetase (Pyrobaculum aerophilum (strain ATCC 51768 / DSM 7523 / JCM 9630 / CIP 104966 / NBRC 100827 / IM2)).